We begin with the raw amino-acid sequence, 395 residues long: Phosphopentomutase (395 aa).

Mn(2+) contacts are provided by Asp14, Asp289, His294, Asp330, His331, and His342.

It belongs to the phosphopentomutase family. The cofactor is Mn(2+).

Its subcellular location is the cytoplasm. It catalyses the reaction 2-deoxy-alpha-D-ribose 1-phosphate = 2-deoxy-D-ribose 5-phosphate. The catalysed reaction is alpha-D-ribose 1-phosphate = D-ribose 5-phosphate. Its pathway is carbohydrate degradation; 2-deoxy-D-ribose 1-phosphate degradation; D-glyceraldehyde 3-phosphate and acetaldehyde from 2-deoxy-alpha-D-ribose 1-phosphate: step 1/2. Its function is as follows. Isomerase that catalyzes the conversion of deoxy-ribose 1-phosphate (dRib-1-P) and ribose 1-phosphate (Rib-1-P) to deoxy-ribose 5-phosphate (dRib-5-P) and ribose 5-phosphate (Rib-5-P), respectively. This is Phosphopentomutase from Mycoplasmopsis pulmonis (strain UAB CTIP) (Mycoplasma pulmonis).